A 229-amino-acid polypeptide reads, in one-letter code: Indole-3-glycerol phosphate synthase (229 aa).

Belongs to the TrpC family.

It carries out the reaction 1-(2-carboxyphenylamino)-1-deoxy-D-ribulose 5-phosphate + H(+) = (1S,2R)-1-C-(indol-3-yl)glycerol 3-phosphate + CO2 + H2O. It functions in the pathway amino-acid biosynthesis; L-tryptophan biosynthesis; L-tryptophan from chorismate: step 4/5. In Pyrococcus abyssi (strain GE5 / Orsay), this protein is Indole-3-glycerol phosphate synthase.